The chain runs to 182 residues: ATP-dependent protease subunit HslV (182 aa).

T12 is a catalytic residue. The Na(+) site is built by G167, C170, and T173.

Belongs to the peptidase T1B family. HslV subfamily. As to quaternary structure, a double ring-shaped homohexamer of HslV is capped on each side by a ring-shaped HslU homohexamer. The assembly of the HslU/HslV complex is dependent on binding of ATP.

Its subcellular location is the cytoplasm. The enzyme catalyses ATP-dependent cleavage of peptide bonds with broad specificity.. Allosterically activated by HslU binding. In terms of biological role, protease subunit of a proteasome-like degradation complex believed to be a general protein degrading machinery. This Acidiphilium cryptum (strain JF-5) protein is ATP-dependent protease subunit HslV.